The sequence spans 128 residues: Putative histidinol dehydrogenase (128 aa).

The segment at 21–84 is disordered; it reads QRPDIAPRHH…EGQEKASGRR (64 aa). Basic and acidic residues-rich tracts occupy residues 34 to 50 and 72 to 81; these read HRAEREAVEADRSRRTA and QGREGQEKAS.

The protein belongs to the histidinol dehydrogenase family.

The catalysed reaction is L-histidinol + 2 NAD(+) + H2O = L-histidine + 2 NADH + 3 H(+). Its pathway is amino-acid biosynthesis; L-histidine biosynthesis; L-histidine from 5-phospho-alpha-D-ribose 1-diphosphate: step 9/9. Catalyzes the sequential NAD-dependent oxidations of L-histidinol to L-histidinaldehyde and then to L-histidine. In Azospirillum brasilense, this protein is Putative histidinol dehydrogenase (hisD).